The chain runs to 360 residues: tRNA (guanine(9)-N1)-methyltransferase (360 aa).

The interval 1–77 (MENQDTEQSQ…RRKERIKEAE (77 aa)) is disordered. Basic and acidic residues-rich tracts occupy residues 8 to 24 (QSQK…DFKR) and 33 to 55 (MTKR…DEYK). Over residues 56–67 (QKKREKKKAARE) the composition is skewed to basic residues. Basic and acidic residues predominate over residues 68 to 77 (RRKERIKEAE). Residues 94 to 293 (RAKVAPQEQI…EVLPPRKVKG (200 aa)) enclose the SAM-dependent MTase TRM10-type domain. S-adenosyl-L-methionine is bound by residues 199 to 200 (LT), Gly-219, 223 to 227 (DKNRY), Cys-231, Leu-245, and 257 to 259 (QVL). The Proton acceptor role is filled by Asp-223. A disordered region spans residues 291–360 (VKGKLTHGSD…SDEPSKGADH (70 aa)). The span at 297–306 (HGSDPEKSIE) shows a compositional bias: basic and acidic residues. The segment covering 307 to 324 (PSEVSEQPVSSEQSEQPV) has biased composition (low complexity). The segment covering 328 to 343 (QPVSSEQPVLSEQPVL) has biased composition (polar residues).

This sequence belongs to the class IV-like SAM-binding methyltransferase superfamily. TRM10 family. In terms of assembly, monomer.

It localises to the cytoplasm. The protein resides in the nucleus. It carries out the reaction guanosine(9) in tRNA + S-adenosyl-L-methionine = N(1)-methylguanosine(9) in tRNA + S-adenosyl-L-homocysteine + H(+). S-adenosyl-L-methionine-dependent guanine N(1)-methyltransferase that catalyzes the formation of N(1)-methylguanine at position 9 (m1G9) in cytoplasmic tRNA. The chain is tRNA (guanine(9)-N1)-methyltransferase from Debaryomyces hansenii (strain ATCC 36239 / CBS 767 / BCRC 21394 / JCM 1990 / NBRC 0083 / IGC 2968) (Yeast).